We begin with the raw amino-acid sequence, 139 residues long: Large ribosomal subunit protein bL17 (139 aa).

This sequence belongs to the bacterial ribosomal protein bL17 family. In terms of assembly, part of the 50S ribosomal subunit. Contacts protein L32.

This chain is Large ribosomal subunit protein bL17, found in Afipia carboxidovorans (strain ATCC 49405 / DSM 1227 / KCTC 32145 / OM5) (Oligotropha carboxidovorans).